The primary structure comprises 1052 residues: Focal adhesion kinase 1 (1052 aa).

The tract at residues 1 to 27 (MAAAYLDPNLNHTPSSSTKTHLGTGME) is disordered. The residue at position 2 (alanine 2) is an N-acetylalanine. Tyrosine 5 carries the phosphotyrosine modification. The segment covering 10–21 (LNHTPSSSTKTH) has biased composition (polar residues). Threonine 13 bears the Phosphothreonine mark. 2 positions are modified to phosphoserine: serine 29 and serine 54. Residues 35-355 (RVLKVFHYFE…GYCRLVNGAT (321 aa)) form the FERM domain. Lysine 152 is covalently cross-linked (Glycyl lysine isopeptide (Lys-Gly) (interchain with G-Cter in SUMO)). Phosphotyrosine is present on residues tyrosine 397 and tyrosine 407. Tyrosine 397 is modified (phosphotyrosine; by autocatalysis). ATP-binding positions include 428–434 (IGEGQFG), lysine 454, and 500–502 (ELC). The Protein kinase domain maps to 431-680 (GQFGDVHQGV…ELKAQLSTIL (250 aa)). Aspartate 546 (proton acceptor) is an active-site residue. A Phosphotyrosine modification is found at tyrosine 570. Residues tyrosine 576 and tyrosine 577 each carry the phosphotyrosine; by RET and SRC modification. Serine 580 is subject to Phosphoserine. Basic and acidic residues predominate over residues 685–697 (VQQEERMRMESRR). Disordered regions lie at residues 685-734 (VQQE…PSPQ) and 837-921 (VRLS…DRSN). The segment at 707-1052 (GSDEAPPKPS…LKMLGQTRPH (346 aa)) is interaction with TGFB1I1. Phosphoserine is present on serine 722. Serine 732 carries the post-translational modification Phosphoserine; by CDK5. Over residues 837 to 849 (VRLSRGSIDREDG) the composition is skewed to basic and acidic residues. Serine 843 is subject to Phosphoserine. The residue at position 861 (tyrosine 861) is a Phosphotyrosine. Positions 869–880 (PAAPPKKPPRPG) are enriched in pro residues. The span at 886 to 896 (SNLSSISSPAD) shows a compositional bias: polar residues. Position 910 is a phosphoserine (serine 910). The interval 912–1052 (PPTANLDRSN…LKMLGQTRPH (141 aa)) is interaction with ARHGEF28. Threonine 914 bears the Phosphothreonine mark. The residue at position 925 (tyrosine 925) is a Phosphotyrosine; by SRC.

Belongs to the protein kinase superfamily. Tyr protein kinase family. FAK subfamily. Interacts with GIT1. Component of a complex that contains at least FER, CTTN and PTK2/FAK1. Interacts with BMX. Interacts with STEAP4. Interacts with ZFYVE21. Interacts with ESR1. Interacts with FGR, FLT4 and RET. Interacts with EPHA2 in resting cells; activation of EPHA2 recruits PTPN11, leading to dephosphorylation of PTK2/FAK1 and dissociation of the complex. Interacts with EPHA1 (kinase activity-dependent). Interacts with MISP. Interacts with PIAS1. Interacts with ARHGAP26 and SHC1. Interacts with RB1CC1; this inhibits PTK2/FAK1 activity and activation of downstream signaling pathways. Interacts with P53/TP53. Interacts with STAT1. Interacts with WASL. Interacts with ARHGEF7. Interacts with DCC. Interacts (via first Pro-rich region) with CAS family members (via SH3 domain), including BCAR1, BCAR3 and CASS4. Interacts with NEDD9 (via C-terminus). Interacts with SORBS1. Interacts with ARHGEF28. Interacts with SHB. Part of a complex composed of THSD1, PTK2/FAK1, TLN1 and VCL. Interacts with PXN and TLN1. Interacts with TGFB1I1. Interacts with PIK3R1 or PIK3R2. Interacts with SRC, GRB2 and GRB7. Interacts with LPXN (via LD motif 3). Interacts with CD36. Interacts with EMP2; regulates PTK2 activation and localization. Interacts with DSCAM. Interacts with AMBRA1. Interacts (when tyrosine-phosphorylated) with tensin TNS1; the interaction is increased by phosphorylation of TNS1. In terms of processing, phosphorylated on tyrosine residues upon activation, e.g. upon integrin signaling. Tyr-397 is the major autophosphorylation site, but other kinases can also phosphorylate this residue. Phosphorylation at Tyr-397 promotes interaction with SRC and SRC family members, leading to phosphorylation at Tyr-576, Tyr-577 and at additional tyrosine residues. FGR promotes phosphorylation at Tyr-397 and Tyr-576. FER promotes phosphorylation at Tyr-577, Tyr-861 and Tyr-925, even when cells are not adherent. Tyr-397, Tyr-576 and Ser-722 are phosphorylated only when cells are adherent. Phosphorylation at Tyr-397 is important for interaction with BMX, PIK3R1 and SHC1. Phosphorylation at Tyr-925 is important for interaction with GRB2. Dephosphorylated by PTPN11; PTPN11 is recruited to PTK2 via EPHA2 (tyrosine phosphorylated). Microtubule-induced dephosphorylation at Tyr-397 is crucial for the induction of focal adhesion disassembly; this dephosphorylation could be catalyzed by PTPN11 and regulated by ZFYVE21. Phosphorylation on tyrosine residues is enhanced by NTN1. Post-translationally, sumoylated; this enhances autophosphorylation.

It localises to the cell junction. The protein resides in the focal adhesion. The protein localises to the cell membrane. Its subcellular location is the cytoplasm. It is found in the perinuclear region. It localises to the cell cortex. The protein resides in the cytoskeleton. The protein localises to the microtubule organizing center. Its subcellular location is the centrosome. It is found in the nucleus. It localises to the cilium basal body. The catalysed reaction is L-tyrosyl-[protein] + ATP = O-phospho-L-tyrosyl-[protein] + ADP + H(+). Its activity is regulated as follows. Subject to autoinhibition, mediated by interactions between the FERM domain and the kinase domain. Activated by autophosphorylation at Tyr-397. This promotes interaction with SRC and phosphorylation at Tyr-576 and Tyr-577 in the kinase activation loop by SRC. Phosphorylation at Tyr-397, Tyr-576 and Tyr-577 is required for maximal kinase activity. In terms of biological role, non-receptor protein-tyrosine kinase that plays an essential role in regulating cell migration, adhesion, spreading, reorganization of the actin cytoskeleton, formation and disassembly of focal adhesions and cell protrusions, cell cycle progression, cell proliferation and apoptosis. Required for early embryonic development and placenta development. Required for embryonic angiogenesis, normal cardiomyocyte migration and proliferation, and normal heart development. Regulates axon growth and neuronal cell migration, axon branching and synapse formation; required for normal development of the nervous system. Plays a role in osteogenesis and differentiation of osteoblasts. Functions in integrin signal transduction, but also in signaling downstream of numerous growth factor receptors, G-protein coupled receptors (GPCR), EPHA2, netrin receptors and LDL receptors. Forms multisubunit signaling complexes with SRC and SRC family members upon activation; this leads to the phosphorylation of additional tyrosine residues, creating binding sites for scaffold proteins, effectors and substrates. Regulates numerous signaling pathways. Promotes activation of phosphatidylinositol 3-kinase and the AKT1 signaling cascade. Promotes activation of MAPK1/ERK2, MAPK3/ERK1 and the MAP kinase signaling cascade. Promotes localized and transient activation of guanine nucleotide exchange factors (GEFs) and GTPase-activating proteins (GAPs), and thereby modulates the activity of Rho family GTPases. Signaling via CAS family members mediates activation of RAC1. Phosphorylates NEDD9 following integrin stimulation. Recruits the ubiquitin ligase MDM2 to P53/TP53 in the nucleus, and thereby regulates P53/TP53 activity, P53/TP53 ubiquitination and proteasomal degradation. Phosphorylates SRC; this increases SRC kinase activity. Phosphorylates ACTN1, ARHGEF7, GRB7, RET and WASL. Promotes phosphorylation of PXN and STAT1; most likely PXN and STAT1 are phosphorylated by a SRC family kinase that is recruited to autophosphorylated PTK2/FAK1, rather than by PTK2/FAK1 itself. Promotes phosphorylation of BCAR1; GIT2 and SHC1; this requires both SRC and PTK2/FAK1. Promotes phosphorylation of BMX and PIK3R1. Functionally, does not contain a kinase domain and inhibits PTK2/FAK1 phosphorylation and signaling. Its enhanced expression can attenuate the nuclear accumulation of LPXN and limit its ability to enhance serum response factor (SRF)-dependent gene transcription. This Mus musculus (Mouse) protein is Focal adhesion kinase 1.